The following is a 201-amino-acid chain: Small ribosomal subunit protein uS4c (201 aa).

The segment at 19-38 (PGLTSKSPKAGSDLRNQLRS) is disordered. The region spanning 89–149 (MRLDNILFRL…DEQKSRALIQ (61 aa)) is the S4 RNA-binding domain.

This sequence belongs to the universal ribosomal protein uS4 family. In terms of assembly, part of the 30S ribosomal subunit. Contacts protein S5. The interaction surface between S4 and S5 is involved in control of translational fidelity.

It is found in the plastid. The protein resides in the chloroplast. One of the primary rRNA binding proteins, it binds directly to 16S rRNA where it nucleates assembly of the body of the 30S subunit. Its function is as follows. With S5 and S12 plays an important role in translational accuracy. This Platanus occidentalis (Sycamore) protein is Small ribosomal subunit protein uS4c (rps4).